Here is a 176-residue protein sequence, read N- to C-terminus: Nucleoside triphosphate/diphosphate phosphatase (176 aa).

The active-site Proton donor is arginine 23. Mg(2+) is bound by residues asparagine 87, aspartate 103, aspartate 105, aspartate 107, aspartate 120, and glutamate 123.

The protein belongs to the Ntdp family. It depends on Mg(2+) as a cofactor.

It carries out the reaction a ribonucleoside 5'-triphosphate + H2O = a ribonucleoside 5'-diphosphate + phosphate + H(+). It catalyses the reaction a ribonucleoside 5'-diphosphate + H2O = a ribonucleoside 5'-phosphate + phosphate + H(+). Has nucleoside phosphatase activity towards nucleoside triphosphates and nucleoside diphosphates. The chain is Nucleoside triphosphate/diphosphate phosphatase from Bacillus anthracis (strain A0248).